The primary structure comprises 472 residues: 3-isopropylmalate dehydratase large subunit (472 aa).

[4Fe-4S] cluster-binding residues include cysteine 349, cysteine 409, and cysteine 412.

Belongs to the aconitase/IPM isomerase family. LeuC type 1 subfamily. As to quaternary structure, heterodimer of LeuC and LeuD. [4Fe-4S] cluster serves as cofactor.

The enzyme catalyses (2R,3S)-3-isopropylmalate = (2S)-2-isopropylmalate. Its pathway is amino-acid biosynthesis; L-leucine biosynthesis; L-leucine from 3-methyl-2-oxobutanoate: step 2/4. In terms of biological role, catalyzes the isomerization between 2-isopropylmalate and 3-isopropylmalate, via the formation of 2-isopropylmaleate. The chain is 3-isopropylmalate dehydratase large subunit from Rhodospirillum rubrum (strain ATCC 11170 / ATH 1.1.1 / DSM 467 / LMG 4362 / NCIMB 8255 / S1).